Reading from the N-terminus, the 214-residue chain is Cytochrome c biogenesis ATP-binding export protein CcmA (214 aa).

In terms of domain architecture, ABC transporter spans 8–212; it reads LYAADLACLK…PPTVLDLSEV (205 aa). 40–47 serves as a coordination point for ATP; sequence GPNGFGKT.

It belongs to the ABC transporter superfamily. CcmA exporter (TC 3.A.1.107) family. The complex is composed of two ATP-binding proteins (CcmA) and two transmembrane proteins (CcmB).

Its subcellular location is the cell inner membrane. The enzyme catalyses heme b(in) + ATP + H2O = heme b(out) + ADP + phosphate + H(+). Part of the ABC transporter complex CcmAB involved in the biogenesis of c-type cytochromes; once thought to export heme, this seems not to be the case, but its exact role is uncertain. Responsible for energy coupling to the transport system. The polypeptide is Cytochrome c biogenesis ATP-binding export protein CcmA (Aromatoleum aromaticum (strain DSM 19018 / LMG 30748 / EbN1) (Azoarcus sp. (strain EbN1))).